The primary structure comprises 2284 residues: RNA1 polyprotein (2284 aa).

At 569–1171 the chain is on the cytoplasmic side; the sequence is CTAEEIFRMH…QVVVENYSLL (603 aa). The 169-residue stretch at 751–919 folds into the SF3 helicase domain; sequence VSKLEEVHAR…DGSFFTPRAY (169 aa). 781–788 contributes to the ATP binding site; sequence GASQSGKT. Residues 1172–1192 traverse the membrane as a helical segment; that stretch reads LTLVAILLLISAAYTLLSTVV. Residues 1193–1217 are Lumenal-facing; sequence ALAGCSSFAGGMVAVTAVNNASIPC. The residue at position 1218 (serine 1218) is an O-(5'-phospho-RNA)-serine. One can recognise a Peptidase C3 domain in the interval 1243 to 1458; it reads GPSKGQGEHE…SVIPNYSSSF (216 aa). Active-site for picornain 3C-like protease activity residues include histidine 1284, glutamate 1328, and cysteine 1420. One can recognise a RdRp catalytic domain in the interval 1728 to 1852; sequence DVGYNCDYKA…TVAQSVMQYF (125 aa).

In terms of processing, specific enzymatic cleavages by picornain 3C-like protease in vivo yield mature proteins. Picornain 3C-like protease is autocatalytically processed. Post-translationally, VPg is uridylylated by the polymerase and is covalently linked to the 5'-end of genomic RNA. This uridylylated form acts as a nucleotide-peptide primer for the polymerase.

The protein localises to the host endoplasmic reticulum lumen. It localises to the host endoplasmic reticulum membrane. The enzyme catalyses RNA(n) + a ribonucleoside 5'-triphosphate = RNA(n+1) + diphosphate. Functionally, picornain 3C-like protease is a thiol protease that cleaves the P1 and P2 polyproteins. The sequence is that of RNA1 polyprotein from Vitis rupestris (Grape).